A 788-amino-acid polypeptide reads, in one-letter code: Multifunctional tryptophan biosynthesis protein (788 aa).

The 196-residue stretch at 12-207 (DILMIDNFDS…MKLKGGTWEE (196 aa)) folds into the Glutamine amidotransferase type-1 domain. 63–65 (GPG) is an L-glutamine binding site. Cys-91 (nucleophile; for GATase activity) is an active-site residue. 141–142 (SL) contacts L-glutamine. Catalysis depends on for GATase activity residues His-181 and Glu-183. Positions 238 to 503 (ILEKICAQRQ…DTRAFIRQLL (266 aa)) are indole-3-glycerol phosphate synthase. The interval 520-788 (LSRSCGIRTE…RAFVKAAKKL (269 aa)) is N-(5'-phosphoribosyl)anthranilate isomerase.

It catalyses the reaction N-(5-phospho-beta-D-ribosyl)anthranilate = 1-(2-carboxyphenylamino)-1-deoxy-D-ribulose 5-phosphate. The catalysed reaction is 1-(2-carboxyphenylamino)-1-deoxy-D-ribulose 5-phosphate + H(+) = (1S,2R)-1-C-(indol-3-yl)glycerol 3-phosphate + CO2 + H2O. It carries out the reaction chorismate + L-glutamine = anthranilate + pyruvate + L-glutamate + H(+). It participates in amino-acid biosynthesis; L-tryptophan biosynthesis; L-tryptophan from chorismate: step 1/5. The protein operates within amino-acid biosynthesis; L-tryptophan biosynthesis; L-tryptophan from chorismate: step 3/5. Its pathway is amino-acid biosynthesis; L-tryptophan biosynthesis; L-tryptophan from chorismate: step 4/5. In terms of biological role, trifunctional enzyme bearing the Gln amidotransferase (GATase) domain of anthranilate synthase, indole-glycerolphosphate synthase, and phosphoribosylanthranilate isomerase activities. This Phanerodontia chrysosporium (White-rot fungus) protein is Multifunctional tryptophan biosynthesis protein (TRPC).